Here is a 256-residue protein sequence, read N- to C-terminus: MCLLIDAGNSRIKWALADTARHFVTSGAFEHASDAPDWSTLPAPRGAWISNVAGDAAAARIDALIEARWPALPRTVVRASAAQCGVTNGYAEPARLGSDRWAGLIGAHAAFADEHLLIATFGTATTLEALRADGHFAGGLIAPGWALMMRSLGMHTAQLPTVSIDAATNLLDELAENDAHAPFAIDTPHALSAGCLQAQAGLIERAWRDLEKAWQAPVRLVLSGGAADAIVRALTVPHTRHDTLVLTGLALIAHSA.

Residue 6-13 (DAGNSRIK) participates in ATP binding. Residues tyrosine 90 and 97-100 (GSDR) contribute to the substrate site. Catalysis depends on aspartate 99, which acts as the Proton acceptor. ATP is bound at residue threonine 123. Threonine 187 contributes to the substrate binding site.

Belongs to the type III pantothenate kinase family. Homodimer. NH4(+) serves as cofactor. K(+) is required as a cofactor.

The protein resides in the cytoplasm. The enzyme catalyses (R)-pantothenate + ATP = (R)-4'-phosphopantothenate + ADP + H(+). The protein operates within cofactor biosynthesis; coenzyme A biosynthesis; CoA from (R)-pantothenate: step 1/5. Its function is as follows. Catalyzes the phosphorylation of pantothenate (Pan), the first step in CoA biosynthesis. The chain is Type III pantothenate kinase from Burkholderia mallei (strain NCTC 10247).